The chain runs to 600 residues: Elongation factor 4 (600 aa).

Residues 5-187 (KYIRNFSIIA…AIVNKLPPPK (183 aa)) form the tr-type G domain. GTP contacts are provided by residues 17 to 22 (DHGKST) and 134 to 137 (NKLD).

The protein belongs to the TRAFAC class translation factor GTPase superfamily. Classic translation factor GTPase family. LepA subfamily.

Its subcellular location is the cell inner membrane. It carries out the reaction GTP + H2O = GDP + phosphate + H(+). Required for accurate and efficient protein synthesis under certain stress conditions. May act as a fidelity factor of the translation reaction, by catalyzing a one-codon backward translocation of tRNAs on improperly translocated ribosomes. Back-translocation proceeds from a post-translocation (POST) complex to a pre-translocation (PRE) complex, thus giving elongation factor G a second chance to translocate the tRNAs correctly. Binds to ribosomes in a GTP-dependent manner. In Rickettsia conorii (strain ATCC VR-613 / Malish 7), this protein is Elongation factor 4.